We begin with the raw amino-acid sequence, 770 residues long: Cyclopiane-type diterpene synthase (770 aa).

Positions 5–335 (ITDEYAVGID…VPRYCKVDRN (331 aa)) are terpene cyclase. Positions 97 and 101 each coordinate Mg(2+). Substrate is bound by residues D97, D101, 190-193 (RIVD), N234, 238-242 (SWDKE), and 328-329 (RY). The short motif at 97–101 (DDETD) is the DDXXD 1 element. An NSE/DTE motif is present at residues 234-242 (NDLFSWDKE). The interval 336 to 720 (PYKDHLEKYG…WALRLLIMKL (385 aa)) is prenyltransferase. The interval 371 to 397 (NQLKEPSSSTYKTHFSPLEPNPGPEQT) is disordered. Positions 374 to 383 (KEPSSSTYKT) are enriched in polar residues. Positions 423, 426, and 455 each coordinate isopentenyl diphosphate. Mg(2+) is bound by residues D462 and D466. A DDXXD 2 motif is present at residues 462 to 466 (DDIQD). Position 471 (R471) interacts with dimethylallyl diphosphate. Residue R472 coordinates isopentenyl diphosphate. 6 residues coordinate dimethylallyl diphosphate: K548, T549, Q584, N591, K620, and K630.

It in the N-terminal section; belongs to the terpene synthase family. The protein in the C-terminal section; belongs to the FPP/GGPP synthase family. In terms of assembly, hexamer. Mg(2+) serves as cofactor.

The enzyme catalyses isopentenyl diphosphate + (2E,6E)-farnesyl diphosphate = (2E,6E,10E)-geranylgeranyl diphosphate + diphosphate. It carries out the reaction (2E,6E,10E)-geranylgeranyl diphosphate + H2O = (+)-penichrysol + diphosphate. The protein operates within secondary metabolite biosynthesis; terpenoid biosynthesis. In terms of biological role, bifunctional terpene synthase converts dimethylallyl diphosphate (DMAPP) and isopentenyl diphosphate (IPP) into a cyclopiane-type diterpene. The C-terminal prenyltransferase (PT) domain of PcCS catalyzes formation of geranylgeranyl pyrophosphate (GGPP), whereas the N-terminal terpene cyclase (TC) domain catalyzes the cyclization of GGPP to the cyclopiane-type diterpene penichrysol. The sequence is that of Cyclopiane-type diterpene synthase from Penicillium chrysogenum (Penicillium notatum).